The primary structure comprises 190 residues: CASP-like protein 1E2 (190 aa).

The disordered stretch occupies residues 1–21 (MEHEGKNNMNGMEMEKGKREL). Residues 1–28 (MEHEGKNNMNGMEMEKGKRELGSRKGVE) lie on the Cytoplasmic side of the membrane. The chain crosses the membrane as a helical span at residues 29–49 (LTMRVLALILTMAAATVLGVA). Over 50–83 (KQTKVVSIKLIPTLPPLDITTTAKASYLSAFVYN) the chain is Extracellular. A helical membrane pass occupies residues 84–104 (ISVNAIACGYTAISIAILMIS). At 105–111 (RGRRSKK) the chain is on the cytoplasmic side. A helical membrane pass occupies residues 112–132 (LLMVVLLGDLVMVALLFSGTG). Topologically, residues 133-163 (AASAIGLMGLHGNKHVMWKKVCGVFGKFCHR) are extracellular. The helical transmembrane segment at 164-184 (AAPSLPLTLLAAVVFMFLVVL) threads the bilayer. Residues 185 to 190 (DAIKLP) lie on the Cytoplasmic side of the membrane.

It belongs to the Casparian strip membrane proteins (CASP) family. Homodimer and heterodimers.

It is found in the cell membrane. The chain is CASP-like protein 1E2 from Arabidopsis thaliana (Mouse-ear cress).